We begin with the raw amino-acid sequence, 261 residues long: Acidic leucine-rich nuclear phosphoprotein 32 family member A (261 aa).

4 LRR repeats span residues 16 to 37 (QITE…TDEY), 39 to 60 (ALES…PKLP), 61 to 83 (NLKK…TTSP), and 84 to 105 (KLQY…KPLE). Residues 118 to 156 (NDATQVDNYREKIFKMLPSLNFLDGFDCNDEEVQSDGDD) enclose the LRRCT domain. 2 stretches are compositionally biased toward acidic residues: residues 145–185 (CNDE…EEAN) and 194–229 (YNDD…DGDA). Positions 145-261 (CNDEEVQSDG…VRGKKRKHDG (117 aa)) are disordered. The segment covering 238-252 (AKDKDGEKEADESQV) has biased composition (basic and acidic residues).

It belongs to the ANP32 family. In terms of processing, phosphorylated on serine residues.

It is found in the nucleus. Its subcellular location is the cytoplasm. Its function is as follows. Implicated in a number of cellular processes, including proliferation, differentiation, caspase-dependent and caspase-independent apoptosis, suppression of transformation (tumor suppressor), inhibition of protein phosphatase 2A, regulation of mRNA trafficking and stability, and inhibition of acetyltransferases as part of the INHAT (inhibitor of histone acetyltransferases) complex. This Drosophila melanogaster (Fruit fly) protein is Acidic leucine-rich nuclear phosphoprotein 32 family member A (Anp32a).